The primary structure comprises 603 residues: Multicopper oxidase MCE (603 aa).

Residues methionine 1–alanine 21 form the signal peptide. The 115-residue stretch at isoleucine 30–glutamate 144 folds into the Plastocyanin-like 1 domain. Asparagine 75 carries N-linked (GlcNAc...) asparagine glycosylation. Residues histidine 79, histidine 81, histidine 123, and histidine 125 each contribute to the Cu cation site. N-linked (GlcNAc...) asparagine glycosylation is found at asparagine 155, asparagine 180, asparagine 235, asparagine 256, asparagine 272, asparagine 275, asparagine 388, asparagine 394, asparagine 413, and asparagine 455. Residues leucine 173–proline 353 form the Plastocyanin-like 2 domain. Residues leucine 450–glycine 581 enclose the Plastocyanin-like 3 domain. A Cu cation-binding site is contributed by histidine 495. N-linked (GlcNAc...) asparagine glycosylation is found at asparagine 512 and asparagine 595.

It belongs to the multicopper oxidase family.

The enzyme catalyses 4 monapinone A + O2 = 2 dinapinone A + 2 H2O. It carries out the reaction 4 monapinone E + O2 = 2 dinapinone E + 2 H2O. It functions in the pathway secondary metabolite biosynthesis. In terms of biological role, multicopper oxidase; part of the gene cluster that mediates the biosynthesis of dinapinones DPA1 (or (M)-DPA) and DPA2 (or (P)-DPA), biaryl dihydronaphthopyranones that act in concert as inhibitors of triacylglycerol accumulation in mammalian cells. The first step in the pathway corresponds to the biosynthesis of dihydroxy-decanoyl-CoA by the fungal type I fatty acid synthase (formed by ORF4 and ORF5). The cluster-specific polyketide synthase (ORF7) then accepts and extends dihydroxy-decanoyl-CoA with 6 malonyl-CoA moieties and cyclizes the molecule to produce a putative polyhydroxynaphthopyranone intermediate, which is further methylated by the cluster-specific methyltransferase (ORF1) at 7-OH to produce monapinone A (MPA). MCE catalyzes the regioselective biaryl coupling of monapinone A (MPA) at the 8,8'-positions to afford dimeric atropisomers DPA1 and DPA2 in a ratio of approximately 1:2.5. Monapinone E (MPE) also appears to be a substrate for MCE and provides the atropisomers dinapinones DPE1 (or (M)-DPE) and DPE2 (or (P)-DPE). In Talaromyces pinophilus (Penicillium pinophilum), this protein is Multicopper oxidase MCE.